The sequence spans 154 residues: UPF0178 protein RC1_2062 (154 aa).

It belongs to the UPF0178 family.

The sequence is that of UPF0178 protein RC1_2062 from Rhodospirillum centenum (strain ATCC 51521 / SW).